A 324-amino-acid chain; its full sequence is NADH-ubiquinone oxidoreductase chain 1 (324 aa).

Helical transmembrane passes span 9–29 (LINP…LTLI), 43–63 (PNIV…KLFI), 77–97 (FLAT…PLPL), 106–126 (LGLL…LGSG), 146–166 (ISYE…AGGF), 177–197 (TIWL…STLA), 228–248 (LFFL…VILF), 259–279 (QISS…FLWI), and 299–319 (FLPL…ATTS).

The protein belongs to the complex I subunit 1 family.

It is found in the mitochondrion inner membrane. The enzyme catalyses a ubiquinone + NADH + 5 H(+)(in) = a ubiquinol + NAD(+) + 4 H(+)(out). Functionally, core subunit of the mitochondrial membrane respiratory chain NADH dehydrogenase (Complex I) that is believed to belong to the minimal assembly required for catalysis. Complex I functions in the transfer of electrons from NADH to the respiratory chain. The immediate electron acceptor for the enzyme is believed to be ubiquinone. The chain is NADH-ubiquinone oxidoreductase chain 1 (MT-ND1) from Scyliorhinus canicula (Small-spotted catshark).